The chain runs to 401 residues: Probable trafficking protein particle complex subunit 13 homolog (401 aa).

It belongs to the TRAPPC13 family.

The chain is Probable trafficking protein particle complex subunit 13 homolog from Caenorhabditis elegans.